Consider the following 164-residue polypeptide: HTH-type transcriptional regulator PapX (164 aa).

In terms of domain architecture, HTH marR-type spans Glu25–Ala159.

It is found in the cytoplasm. In Escherichia coli, this protein is HTH-type transcriptional regulator PapX (papX).